We begin with the raw amino-acid sequence, 391 residues long: PPE family protein PPE18 (391 aa).

The protein belongs to the mycobacterial PPE family. In terms of assembly, interacts with human TLR2.

The protein localises to the secreted. The protein resides in the cell wall. Its subcellular location is the cell surface. Its function is as follows. Could be a crucial virulence factor for intracellular survival of M.tuberculosis. Favors development of Th2-type response, and down-regulates the pro-inflammatory and Th1-type response. Specifically interacts with the human Toll-like receptor 2 (TLR2), leading to an early and sustained activation of p38 MAPK, which induces IL-10 production and activates Th2-type immune response. Also inhibits pro-inflammatory cytokines IL-12p40 and TNF-alpha production. Acts by up-regulating the expression as well as tyrosine phosphorylation of suppressor of cytokine signaling 3 (SOCS-3), leading to the inhibition of phosphorylation of I-kappa-B-alpha, thereby preventing nuclear translocation of the NF-kappa-B/REL subunits and expression of NF-kappa-B regulated genes like IL-12 and TNF-alpha. Induction of SOCS-3 probably depends on the activation of p38 MAPK. This Mycobacterium tuberculosis (strain ATCC 25618 / H37Rv) protein is PPE family protein PPE18.